We begin with the raw amino-acid sequence, 500 residues long: Lysine--tRNA ligase (500 aa).

Residues Glu410 and Glu417 each coordinate Mg(2+).

It belongs to the class-II aminoacyl-tRNA synthetase family. In terms of assembly, homodimer. Mg(2+) serves as cofactor.

It is found in the cytoplasm. The catalysed reaction is tRNA(Lys) + L-lysine + ATP = L-lysyl-tRNA(Lys) + AMP + diphosphate. The sequence is that of Lysine--tRNA ligase from Shewanella baltica (strain OS155 / ATCC BAA-1091).